The primary structure comprises 378 residues: Quinolinate synthase (378 aa).

Iminosuccinate contacts are provided by His-59 and Ser-80. [4Fe-4S] cluster is bound at residue Cys-125. Residues 151–153 and Ser-168 contribute to the iminosuccinate site; that span reads YAN. Cys-212 contacts [4Fe-4S] cluster. Iminosuccinate-binding positions include 238-240 and Thr-255; that span reads HPE. Cys-309 lines the [4Fe-4S] cluster pocket.

The protein belongs to the quinolinate synthase family. Type 1 subfamily. [4Fe-4S] cluster is required as a cofactor.

It localises to the cytoplasm. The enzyme catalyses iminosuccinate + dihydroxyacetone phosphate = quinolinate + phosphate + 2 H2O + H(+). Its pathway is cofactor biosynthesis; NAD(+) biosynthesis; quinolinate from iminoaspartate: step 1/1. Catalyzes the condensation of iminoaspartate with dihydroxyacetone phosphate to form quinolinate. In Burkholderia mallei (strain NCTC 10247), this protein is Quinolinate synthase.